A 328-amino-acid chain; its full sequence is Beta-ketoacyl-[acyl-carrier-protein] synthase III (328 aa).

Residues C122 and H255 contribute to the active site. The tract at residues 256-260 is ACP-binding; it reads QANVR. The active site involves N285.

This sequence belongs to the thiolase-like superfamily. FabH family. In terms of assembly, homodimer.

The protein localises to the cytoplasm. The enzyme catalyses malonyl-[ACP] + acetyl-CoA + H(+) = 3-oxobutanoyl-[ACP] + CO2 + CoA. Its pathway is lipid metabolism; fatty acid biosynthesis. Catalyzes the condensation reaction of fatty acid synthesis by the addition to an acyl acceptor of two carbons from malonyl-ACP. Catalyzes the first condensation reaction which initiates fatty acid synthesis and may therefore play a role in governing the total rate of fatty acid production. Possesses both acetoacetyl-ACP synthase and acetyl transacylase activities. Its substrate specificity determines the biosynthesis of branched-chain and/or straight-chain of fatty acids. This is Beta-ketoacyl-[acyl-carrier-protein] synthase III from Bordetella avium (strain 197N).